A 220-amino-acid polypeptide reads, in one-letter code: MTKGILGRKIGMTQVFGENGDLIPVTVVEAGQNVVLQKKTEEVDGYNAIQVGFEDKQAYKKDSKSNKYANKPAEGHAKKAGTAPKRFIREFKNINVDEYEVGQEVSVDTFEAGDIIDVTGVSKGKGFQGNIKRHGHARGPMAHGSHFHRAPGSVGMASDASKVFKGHKMPGRMGGNTVTVQNLEVVQIDAENNVILVKGNVPGPKKGLVEIKTSIKKGNK.

This sequence belongs to the universal ribosomal protein uL3 family. Part of the 50S ribosomal subunit. Forms a cluster with proteins L14 and L19.

In terms of biological role, one of the primary rRNA binding proteins, it binds directly near the 3'-end of the 23S rRNA, where it nucleates assembly of the 50S subunit. The protein is Large ribosomal subunit protein uL3 of Staphylococcus carnosus (strain TM300).